Consider the following 128-residue polypeptide: Secreted RxLR effector protein 57 (128 aa).

The first 31 residues, 1 to 31 (MHRKRLRVVLSATLLDLITCVQLMLDPLVRS), serve as a signal peptide directing secretion. The RxLR signature appears at 58–61 (RILR).

This sequence belongs to the RxLR effector family.

The protein resides in the secreted. It is found in the host nucleus. It localises to the host cytoplasm. Functionally, secreted effector that completely suppresses the host cell death induced by cell death-inducing proteins. The chain is Secreted RxLR effector protein 57 from Plasmopara viticola (Downy mildew of grapevine).